Here is a 367-residue protein sequence, read N- to C-terminus: Alanine racemase (367 aa).

Catalysis depends on lysine 40, which acts as the Proton acceptor; specific for D-alanine. Lysine 40 is modified (N6-(pyridoxal phosphate)lysine). Position 136 (arginine 136) interacts with substrate. The Proton acceptor; specific for L-alanine role is filled by tyrosine 263. Methionine 310 is a binding site for substrate.

This sequence belongs to the alanine racemase family. Pyridoxal 5'-phosphate serves as cofactor.

It catalyses the reaction L-alanine = D-alanine. It functions in the pathway amino-acid biosynthesis; D-alanine biosynthesis; D-alanine from L-alanine: step 1/1. Catalyzes the interconversion of L-alanine and D-alanine. May also act on other amino acids. In Streptococcus suis (strain 98HAH33), this protein is Alanine racemase (alr).